The chain runs to 35 residues: Malate dehydrogenase, mitochondrial (35 aa).

Position 7 (Asn7) interacts with NAD(+). Arg23 is a binding site for substrate.

The protein belongs to the LDH/MDH superfamily. MDH type 1 family. In terms of assembly, homodimer.

The protein resides in the mitochondrion matrix. The enzyme catalyses (S)-malate + NAD(+) = oxaloacetate + NADH + H(+). In Capsicum annuum var. annuum (Red pepper), this protein is Malate dehydrogenase, mitochondrial.